The primary structure comprises 516 residues: UvrABC system protein C (516 aa).

Positions 9 to 87 (HLPGCYLFKD…IKKHWPRYNI (79 aa)) constitute a GIY-YIG domain. A UVR domain is found at 191–226 (GELIESMEKEMKKMAAKQMFEQAMALRDEISALEYL).

It belongs to the UvrC family. In terms of assembly, interacts with UvrB in an incision complex.

Its subcellular location is the cytoplasm. In terms of biological role, the UvrABC repair system catalyzes the recognition and processing of DNA lesions. UvrC both incises the 5' and 3' sides of the lesion. The N-terminal half is responsible for the 3' incision and the C-terminal half is responsible for the 5' incision. This chain is UvrABC system protein C, found in Methanosarcina acetivorans (strain ATCC 35395 / DSM 2834 / JCM 12185 / C2A).